We begin with the raw amino-acid sequence, 867 residues long: Mitochondrial escape protein 2 (867 aa).

The transit peptide at 1–25 (MIIRTLRSQLRLPKPVYISPPCRYY) directs the protein to the mitochondrion. The Mitochondrial matrix portion of the chain corresponds to 26 to 279 (STDLEKLKKE…LVSLISNHTK (254 aa)). Residues 179–264 (GTPWIEDLRR…TTLHIQFVAI (86 aa)) enclose the RRM domain. The helical transmembrane segment at 280-300 (IAIPVLIALLATFAVLIFDPI) threads the bilayer. At 301 to 867 (REWFIEYKIL…DGKSFLGIKF (567 aa)) the chain is on the mitochondrial intermembrane side. Residues 795-852 (IGRLISLEAAKIQKLEEELEKIYKIGKVDGRIDYVSQKIEASNKKILDLEKQAADVAS) adopt a coiled-coil conformation.

It belongs to the YME2 family.

It localises to the mitochondrion inner membrane. Plays a role in maintaining the mitochondrial genome and in controlling the mtDNA escape. Involved in the regulation of mtDNA nucleotide structure and number. May have a dispensable role in early maturation of pre-rRNA. This Candida albicans (strain SC5314 / ATCC MYA-2876) (Yeast) protein is Mitochondrial escape protein 2 (PRP13).